The primary structure comprises 240 residues: Putative protein FAM10A4 (240 aa).

The disordered stretch occupies residues 38–94; that stretch reads MGGTATQKAKSEENTKEEKPDSKVEEDLKADEPSSEESDLEIDKEGVIEPDTDAPQE. Residues 46–69 are compositionally biased toward basic and acidic residues; it reads AKSEENTKEEKPDSKVEEDLKADE. Positions 85-94 are enriched in acidic residues; that stretch reads IEPDTDAPQE. 3 TPR repeats span residues 110–143, 145–177, and 179–211; these read ANDK…NPRL, ILYA…NPDS, and QPYK…DYDE. The tract at residues 220–240 is disordered; it reads VQPRAQKIAEHQRKYERKREE. Basic and acidic residues predominate over residues 226 to 240; sequence KIAEHQRKYERKREE.

The protein belongs to the FAM10 family. In terms of tissue distribution, highly expressed in bone marrow and weakly in placenta, pancreas, heart and HeLa cell line.

It localises to the cytoplasm. In Homo sapiens (Human), this protein is Putative protein FAM10A4 (ST13P4).